The following is a 337-amino-acid chain: Fructose-1,6-bisphosphatase class 1 (337 aa).

The Mg(2+) site is built by glutamate 89, aspartate 112, leucine 114, and aspartate 115. Substrate-binding positions include 115-118 (DGSS), asparagine 208, tyrosine 241, and lysine 271. Glutamate 277 contributes to the Mg(2+) binding site.

This sequence belongs to the FBPase class 1 family. Homotetramer. Requires Mg(2+) as cofactor.

It is found in the cytoplasm. The catalysed reaction is beta-D-fructose 1,6-bisphosphate + H2O = beta-D-fructose 6-phosphate + phosphate. It functions in the pathway carbohydrate biosynthesis; gluconeogenesis. The protein is Fructose-1,6-bisphosphatase class 1 of Psychromonas ingrahamii (strain DSM 17664 / CCUG 51855 / 37).